The sequence spans 355 residues: Probable poly-beta-1,6-N-acetyl-D-glucosamine export protein (355 aa).

The next 10 helical transmembrane spans lie at 13 to 30 (AFIC…QITL), 45 to 67 (YIRN…LTTL), 74 to 96 (INYL…LFYS), 116 to 138 (VLGQ…SYII), 145 to 167 (LFNS…HYFL), 187 to 204 (MILG…IGYN), 211 to 233 (FLEK…FIAV), 243 to 262 (SFTY…LLGV), 269 to 291 (MLLN…HPII), and 306 to 328 (TIVF…GMML).

It belongs to the acyltransferase 3 family.

It localises to the cell membrane. Functionally, presumably involved in the export of the biofilm adhesin polysaccharide poly-beta-1,6-N-acetyl-D-glucosamine (PNAG, also referred to as PIA) across the cell membrane. The sequence is that of Probable poly-beta-1,6-N-acetyl-D-glucosamine export protein (icaC) from Staphylococcus epidermidis.